The sequence spans 1190 residues: Pumilio homolog 1 (1190 aa).

4 disordered regions span residues 38-74, 491-531, 611-675, and 744-777; these read LTSG…GVAG, SNSA…QQTD, ANGP…NSSL, and GPVG…LNLG. 4 stretches are compositionally biased toward low complexity: residues 491 to 508, 518 to 531, 628 to 675, and 765 to 777; these read SNSA…GQQQ, PLTP…QQTD, QQPQ…NSSL, and LSSH…LNLG. Residues 830–1172 enclose the PUM-HD domain; it reads GRSRLLEDFR…HILAKLEKYY (343 aa). Pumilio repeat units lie at residues 850 to 885, 886 to 921, 922 to 959, 960 to 995, 996 to 1031, 1032 to 1067, 1068 to 1103, and 1107 to 1146; these read EIAG…LVFN, EILQ…ALAE, RIRG…EMVR, ELDG…FIID, AFKS…PILE, ELHQ…KIVA, EIRG…MLID, and TMND…IVMH. An adenine-nucleotide binding in RNA target region spans residues 865 to 869; it reads SRFIQ. The segment at 901–905 is uracil-nucleotide binding in RNA target; the sequence is NYVIQ. Residues 937 to 941 form an adenine-nucleotide binding in RNA target region; sequence CRVIQ. The segment at 975-979 is non-specific-nucleotide binding in RNA target; sequence NHVVQ. The adenine-nucleotide binding in RNA target stretch occupies residues 1011–1015; that stretch reads CRVIQ. Positions 1047-1051 are uracil-nucleotide binding in RNA target; that stretch reads NYVIQ. Residues 1083–1087 form a guanine-nucleotide binding in RNA target region; the sequence is SNVVE. The tract at residues 1126-1130 is uracil-nucleotide binding in RNA target; it reads NYVVQ.

Interacts with cpeb1-a; interacts with unphosphorylated cpeb1-a but not phosphorylated. Component of a complex with papd4, sympk, tacc3, parn, dazl and cpeb1. Post-translationally, phosphorylated. Phosphorylation takes place at the time of dissociation of cpeb1-a from pum1 and the translational activation of ccnb1 mRNA. Present in oocytes (at protein level).

Its subcellular location is the cytoplasm. It localises to the P-body. The protein localises to the cytoplasmic granule. Its function is as follows. Sequence-specific RNA-binding protein that acts as a post-transcriptional repressor by binding the 3'-UTR of mRNA targets. Binds to an RNA consensus sequence, the Pumilio Response Element (PRE), 5'-UGUANAUA-3', that is related to the Nanos Response Element (NRE). Mediates post-transcriptional repression of transcripts via different mechanisms: acts via direct recruitment of deadenylase complexes leading to translational inhibition and mRNA degradation. Also mediates deadenylation-independent repression by promoting accessibility of miRNAs. Acts as a post-transcriptional repressor of ccnb1 mRNA during oocyte maturation. In Xenopus laevis (African clawed frog), this protein is Pumilio homolog 1.